A 657-amino-acid polypeptide reads, in one-letter code: Protein FAM200B (657 aa).

Belongs to the FAM200 family.

The protein is Protein FAM200B of Homo sapiens (Human).